The chain runs to 290 residues: Glycine--tRNA ligase alpha subunit (290 aa).

It belongs to the class-II aminoacyl-tRNA synthetase family. Tetramer of two alpha and two beta subunits.

The protein localises to the cytoplasm. The catalysed reaction is tRNA(Gly) + glycine + ATP = glycyl-tRNA(Gly) + AMP + diphosphate. This is Glycine--tRNA ligase alpha subunit from Prochlorococcus marinus (strain NATL2A).